The following is a 98-amino-acid chain: Co-chaperonin GroES (98 aa).

Belongs to the GroES chaperonin family. In terms of assembly, heptamer of 7 subunits arranged in a ring. Interacts with the chaperonin GroEL.

The protein localises to the cytoplasm. Its function is as follows. Together with the chaperonin GroEL, plays an essential role in assisting protein folding. The GroEL-GroES system forms a nano-cage that allows encapsulation of the non-native substrate proteins and provides a physical environment optimized to promote and accelerate protein folding. GroES binds to the apical surface of the GroEL ring, thereby capping the opening of the GroEL channel. The protein is Co-chaperonin GroES of Paenarthrobacter aurescens (strain TC1).